Here is an 85-residue protein sequence, read N- to C-terminus: Alpha-insect toxin Bot14 (85 aa).

Residues 1–18 (MSSLMISTAMKGKAPYRQ) form the signal peptide. The LCN-type CS-alpha/beta domain maps to 20–84 (RDGYIAQPHN…GIIVHGEKCH (65 aa)). 4 cysteine pairs are disulfide-bonded: Cys-30/Cys-83, Cys-34/Cys-55, Cys-41/Cys-65, and Cys-45/Cys-67.

It belongs to the long (4 C-C) scorpion toxin superfamily. Sodium channel inhibitor family. Alpha subfamily. In terms of tissue distribution, expressed by the venom gland.

The protein resides in the secreted. Functionally, alpha toxins bind voltage-independently at site-3 of sodium channels (Nav) and inhibit the inactivation of the activated channels, thereby blocking neuronal transmission. This toxin is active only on insects. This is Alpha-insect toxin Bot14 from Buthus occitanus tunetanus (Common European scorpion).